A 525-amino-acid chain; its full sequence is Bifunctional purine biosynthesis protein PurH (525 aa).

Residues 1 to 149 (MSDPVIKRAL…KNNESVTVVT (149 aa)) enclose the MGS-like domain.

The protein belongs to the PurH family.

The catalysed reaction is (6R)-10-formyltetrahydrofolate + 5-amino-1-(5-phospho-beta-D-ribosyl)imidazole-4-carboxamide = 5-formamido-1-(5-phospho-D-ribosyl)imidazole-4-carboxamide + (6S)-5,6,7,8-tetrahydrofolate. It carries out the reaction IMP + H2O = 5-formamido-1-(5-phospho-D-ribosyl)imidazole-4-carboxamide. The protein operates within purine metabolism; IMP biosynthesis via de novo pathway; 5-formamido-1-(5-phospho-D-ribosyl)imidazole-4-carboxamide from 5-amino-1-(5-phospho-D-ribosyl)imidazole-4-carboxamide (10-formyl THF route): step 1/1. It participates in purine metabolism; IMP biosynthesis via de novo pathway; IMP from 5-formamido-1-(5-phospho-D-ribosyl)imidazole-4-carboxamide: step 1/1. The sequence is that of Bifunctional purine biosynthesis protein PurH from Pelodictyon phaeoclathratiforme (strain DSM 5477 / BU-1).